We begin with the raw amino-acid sequence, 256 residues long: Zinc import ATP-binding protein ZnuC 1 (256 aa).

Residues 5–220 form the ABC transporter domain; sequence LTLQDVCVVF…PKYIALFGQQ (216 aa). 37 to 44 provides a ligand contact to ATP; the sequence is GPNGAGKS. The interval 232–256 is disordered; the sequence is HHHNHDLSGEPSDGSCCSKNKKAHQ.

This sequence belongs to the ABC transporter superfamily. Zinc importer (TC 3.A.1.15.5) family. In terms of assembly, the complex is composed of two ATP-binding proteins (ZnuC), two transmembrane proteins (ZnuB) and a solute-binding protein (ZnuA).

It is found in the cell inner membrane. The enzyme catalyses Zn(2+)(out) + ATP(in) + H2O(in) = Zn(2+)(in) + ADP(in) + phosphate(in) + H(+)(in). Functionally, part of the ABC transporter complex ZnuABC involved in zinc import. Responsible for energy coupling to the transport system. This chain is Zinc import ATP-binding protein ZnuC 1, found in Aliivibrio fischeri (strain ATCC 700601 / ES114) (Vibrio fischeri).